A 99-amino-acid chain; its full sequence is Defensin-like protein 2 (99 aa).

An N-terminal signal peptide occupies residues 1 to 30 (MAMAKKSVSSFTLIFILVLVIFEVPEIKAQ). 4 disulfide bridges follow: cysteine 34–cysteine 86, cysteine 47–cysteine 71, cysteine 56–cysteine 81, and cysteine 60–cysteine 83. Positions 94–99 (ILRGGI) are excised as a propeptide.

This sequence belongs to the DEFL family. Protease inhibitor I18 (RTI/MTI-2) subfamily.

The protein localises to the secreted. Functionally, inhibits bovine beta-trypsin and alpha-chymotrypsin on a 1:1 molar basis. This is Defensin-like protein 2 from Sinapis alba (White mustard).